The primary structure comprises 198 residues: Probable GTP-binding protein EngB (198 aa).

The region spanning 22–195 (DLPEIALAGR…WKAIHKMTKT (174 aa)) is the EngB-type G domain. GTP-binding positions include 30-37 (GRSNVGKS), 57-61 (GKTQT), 75-78 (DVPG), 142-145 (TKAD), and 174-176 (FSS). Residues S37 and T59 each contribute to the Mg(2+) site.

This sequence belongs to the TRAFAC class TrmE-Era-EngA-EngB-Septin-like GTPase superfamily. EngB GTPase family. Mg(2+) serves as cofactor.

In terms of biological role, necessary for normal cell division and for the maintenance of normal septation. This Bacillus mycoides (strain KBAB4) (Bacillus weihenstephanensis) protein is Probable GTP-binding protein EngB.